The chain runs to 375 residues: L-asparaginase 2 (375 aa).

The signal sequence occupies residues 1–19; that stretch reads MKKQRMLVLFTALLFVFTG. The disordered stretch occupies residues 22 to 46; the sequence is HSPETKESPKEKAQTQKVSSASASE. The span at 24–35 shows a compositional bias: basic and acidic residues; that stretch reads PETKESPKEKAQ. The 325-residue stretch at 51-375 folds into the Asparaginase/glutaminase domain; it reads PNIRILATGG…QKIQAYFNEY (325 aa). T61 functions as the O-isoaspartyl threonine intermediate in the catalytic mechanism. Substrate contacts are provided by residues S108 and 141–142; that span reads TD.

It belongs to the asparaginase 1 family. As to quaternary structure, homotetramer.

It carries out the reaction L-asparagine + H2O = L-aspartate + NH4(+). Its function is as follows. Catalyzes the conversion of L-asparagine to L-aspartate and ammonium. This chain is L-asparaginase 2 (ansZ), found in Bacillus subtilis (strain 168).